A 193-amino-acid polypeptide reads, in one-letter code: Protein D5 (193 aa).

In terms of biological role, repression of replication initiation (possible). The protein is Protein D5 (ddpE) of Dictyostelium discoideum (Social amoeba).